The primary structure comprises 116 residues: Large ribosomal subunit protein bL20 (116 aa).

The protein belongs to the bacterial ribosomal protein bL20 family.

Functionally, binds directly to 23S ribosomal RNA and is necessary for the in vitro assembly process of the 50S ribosomal subunit. It is not involved in the protein synthesizing functions of that subunit. In Phocaeicola vulgatus (strain ATCC 8482 / DSM 1447 / JCM 5826 / CCUG 4940 / NBRC 14291 / NCTC 11154) (Bacteroides vulgatus), this protein is Large ribosomal subunit protein bL20.